A 253-amino-acid chain; its full sequence is Maleate isomerase (253 aa).

Substrate is bound by residues N14, 80-82, Y137, and N167; that span reads CLV. C80 serves as the catalytic Nucleophile. C80 carries the S-(2-succinyl)cysteine modification. Residue C198 is the Proton donor of the active site. Position 199-200 (199-200) interacts with substrate; that stretch reads VQ.

It belongs to the maleate isomerase family. As to quaternary structure, homodimer.

The catalysed reaction is maleate = fumarate. Functionally, catalyzes cis-trans isomerization of the C2-C3 double bond in maleate to yield fumarate. This is Maleate isomerase from Alcaligenes faecalis.